The chain runs to 136 residues: Histone H3 (136 aa).

A disordered region spans residues 1–43 (MARTKQTARKSTGGKAPRKQLATKAARKSAPASGGVKKPHRFR). Lys5 carries the N6-methylated lysine modification. An N6-acetyllysine; alternate modification is found at Lys10. An N6-methylated lysine; alternate modification is found at Lys10. A Phosphoserine modification is found at Ser11. Thr12 carries the post-translational modification Phosphothreonine. N6-acetyllysine is present on Lys15. 2 positions are modified to N6-acetyllysine; alternate: Lys19 and Lys24. Residues Lys19 and Lys24 each carry the N6-methylated lysine; alternate modification. At Lys28 the chain carries N6-methylated lysine. Ser29 carries the post-translational modification Phosphoserine. Lys37 is subject to N6-methylated lysine.

It belongs to the histone H3 family. In terms of assembly, the nucleosome is a histone octamer containing two molecules each of H2A, H2B, H3 and H4 assembled in one H3-H4 heterotetramer and two H2A-H2B heterodimers. The octamer wraps approximately 147 bp of DNA. Acetylation is generally linked to gene activation. Can be acetylated to form H3K9ac, H3K14ac, H3K18ac and H3K23ac. H3K9ac could compete with H3K9me and prevent gene silencing. H3K9ac is restricted to euchromatin. In terms of processing, methylated to form mainly H3K4me, H3K9me, H3K18me, H3K23me, H3K27me and H3K36me. H3K4me1/2/3, H3K9me3, H3K27me3 and H3K36me1/2/3 are typical marks for euchromatin, whereas heterochromatic chromocenters are enriched in H3K9me1/2 and H3K27me1/2. H2BK143ub1 is probably prerequisite for H3K4me. Post-translationally, can be phosphorylated to form H3S10ph, H3T11ph and H3S28ph.

The protein localises to the nucleus. Its subcellular location is the chromosome. Functionally, core component of nucleosome. Nucleosomes wrap and compact DNA into chromatin, limiting DNA accessibility to the cellular machineries which require DNA as a template. Histones thereby play a central role in transcription regulation, DNA repair, DNA replication and chromosomal stability. DNA accessibility is regulated via a complex set of post-translational modifications of histones, also called histone code, and nucleosome remodeling. This is Histone H3 from Griffithsia japonica (Red alga).